We begin with the raw amino-acid sequence, 782 residues long: ATP-dependent 6-phosphofructokinase, muscle type (782 aa).

Thr2 is subject to N-acetylthreonine. Residues 2-390 (THEEHHAAKT…NWEVYKLLAH (389 aa)) form an N-terminal catalytic PFK domain 1 region. Residues Gly25, 88-89 (RC), and 118-121 (GDGS) each bind ATP. Asp119 contributes to the Mg(2+) binding site. Ser133 carries the phosphoserine modification. Substrate is bound by residues 164–166 (SID), Arg201, 208–210 (MGR), Glu264, Arg292, and 298–301 (HVQR). The Proton acceptor role is filled by Asp166. A Phosphoserine modification is found at Ser377. The segment at 391–403 (IRPPVSKTSATMH) is interdomain linker. Positions 404–782 (TVAVMNVGAP…SRKRSGETSI (379 aa)) are C-terminal regulatory PFK domain 2. Residues Arg473 and 530 to 534 (TVSNN) contribute to the beta-D-fructose 2,6-bisphosphate site. Ser532 carries O-linked (GlcNAc) serine glycosylation. N6-(2-hydroxyisobutyryl)lysine is present on Lys559. Residues Arg568, 575 to 577 (MGG), Glu631, Arg657, and 663 to 666 (HMQQ) each bind beta-D-fructose 2,6-bisphosphate. Ser669 is subject to Phosphoserine. Arg737 contacts beta-D-fructose 2,6-bisphosphate. Ser777 carries the phosphoserine modification.

It belongs to the phosphofructokinase type A (PFKA) family. ATP-dependent PFK group I subfamily. Eukaryotic two domain clade 'E' sub-subfamily. Homo- and heterotetramers. Phosphofructokinase (PFK) enzyme functions as a tetramer composed of different combinations of 3 types of subunits, called PFKM (M), PFKL (L) and PFKP (P). The composition of the PFK tetramer differs according to the tissue type it is present in. The kinetic and regulatory properties of the tetrameric enzyme are dependent on the subunit composition, hence can vary across tissues. Interacts (via C-terminus) with HK1 (via N-terminal spermatogenic cell-specific region). It depends on Mg(2+) as a cofactor. GlcNAcylation decreases enzyme activity.

It localises to the cytoplasm. It carries out the reaction beta-D-fructose 6-phosphate + ATP = beta-D-fructose 1,6-bisphosphate + ADP + H(+). The protein operates within carbohydrate degradation; glycolysis; D-glyceraldehyde 3-phosphate and glycerone phosphate from D-glucose: step 3/4. Allosterically activated by ADP, AMP, or fructose 2,6-bisphosphate, and allosterically inhibited by ATP or citrate. Catalyzes the phosphorylation of D-fructose 6-phosphate to fructose 1,6-bisphosphate by ATP, the first committing step of glycolysis. The polypeptide is ATP-dependent 6-phosphofructokinase, muscle type (PFKM) (Canis lupus familiaris (Dog)).